We begin with the raw amino-acid sequence, 238 residues long: Type III secretion protein hrcQa (238 aa).

Positions 66–238 are hrcQa-C; that stretch reads DAEALLSLLG…SHEEHSHHEY (173 aa).

In terms of assembly, interacts with hrcQb.

It localises to the cell inner membrane. Functionally, component of the type III secretion system, which is required for effector protein delivery, parasitism, and pathogenicity. Probably participates in the formation of a C-ring-like assembly along with hrcQb. The polypeptide is Type III secretion protein hrcQa (hrcQa) (Pseudomonas syringae pv. syringae).